Consider the following 223-residue polypeptide: MTDQPSSIALLRLMAWLSPAFPVGGFAYSHGLECAVHDGLVADATSLANWLETLVKMGSGWNDAVLFCESWRRARNAGDLDEVAALAEALAGSRERHAETMLQGAAFLKAAAAWPNPVLARLPAECAYCVTVGAIAGGNGIALQDALSAFLQAFFSNLVQAAIRLGVVGQSEATTLLAGFEPLALSTADRASRSTLDDLGGCAFVSDVVAMKHETQYSRLFRS.

This sequence belongs to the UreF family. UreD, UreF and UreG form a complex that acts as a GTP-hydrolysis-dependent molecular chaperone, activating the urease apoprotein by helping to assemble the nickel containing metallocenter of UreC. The UreE protein probably delivers the nickel.

It is found in the cytoplasm. Functionally, required for maturation of urease via the functional incorporation of the urease nickel metallocenter. The polypeptide is Urease accessory protein UreF (Mesorhizobium japonicum (strain LMG 29417 / CECT 9101 / MAFF 303099) (Mesorhizobium loti (strain MAFF 303099))).